A 278-amino-acid chain; its full sequence is 4-deoxy-L-threo-5-hexosulose-uronate ketol-isomerase (278 aa).

The Zn(2+) site is built by His-196, His-198, Glu-203, and His-245.

Belongs to the KduI family. Zn(2+) serves as cofactor.

It carries out the reaction 5-dehydro-4-deoxy-D-glucuronate = 3-deoxy-D-glycero-2,5-hexodiulosonate. It participates in glycan metabolism; pectin degradation; 2-dehydro-3-deoxy-D-gluconate from pectin: step 4/5. Catalyzes the isomerization of 5-dehydro-4-deoxy-D-glucuronate to 3-deoxy-D-glycero-2,5-hexodiulosonate. The polypeptide is 4-deoxy-L-threo-5-hexosulose-uronate ketol-isomerase (Shigella flexneri).